We begin with the raw amino-acid sequence, 133 residues long: Holo-[acyl-carrier-protein] synthase (133 aa).

The Mg(2+) site is built by aspartate 8 and glutamate 56.

This sequence belongs to the P-Pant transferase superfamily. AcpS family. It depends on Mg(2+) as a cofactor.

The protein resides in the cytoplasm. It carries out the reaction apo-[ACP] + CoA = holo-[ACP] + adenosine 3',5'-bisphosphate + H(+). Its function is as follows. Transfers the 4'-phosphopantetheine moiety from coenzyme A to a Ser of acyl-carrier-protein. The chain is Holo-[acyl-carrier-protein] synthase from Clostridium perfringens (strain SM101 / Type A).